A 149-amino-acid chain; its full sequence is L-alanine exporter AlaE (149 aa).

Transmembrane regions (helical) follow at residues 16 to 36 (FAMV…LSGM), 46 to 66 (LVAI…RDLF), 85 to 105 (ILAY…VVGA), and 112 to 132 (AAVS…GYFL).

The protein belongs to the AlaE exporter family.

The protein localises to the cell inner membrane. Its function is as follows. Exports L-alanine. This chain is L-alanine exporter AlaE, found in Shigella flexneri.